The following is a 264-amino-acid chain: uncharacterized protein (264 aa).

The N-terminal stretch at 1 to 23 (MQQWNLTISNILIGLFFCFSAQA) is a signal peptide.

This is an uncharacterized protein from Shewanella oneidensis (strain ATCC 700550 / JCM 31522 / CIP 106686 / LMG 19005 / NCIMB 14063 / MR-1).